The sequence spans 386 residues: Cytochrome b (386 aa).

4 helical membrane passes run 39-59 (FGSLLGLCLVIQLITGIFLAM), 83-104 (FMLKYIHANGASLFFLCVYIHM), 119-139 (WNIGVIIYLVMMLTAFLGYVL), and 184-204 (FFSLHYLFPFLIAGLGVLHIL). His-89 and His-103 together coordinate heme b. Positions 188 and 202 each coordinate heme b. Residue His-207 participates in a ubiquinone binding. Transmembrane regions (helical) follow at residues 232–252 (YKDLFGIMVLSSILVILCYFM), 294–314 (LGGVLAMVFSILVLLLLPFIH), 326–346 (LGKIAFWFLVADFILLTWLGA), and 353–374 (YIMIGQFASLFYFCYFLVLVPL).

It belongs to the cytochrome b family. The main subunits of complex b-c1 are: cytochrome b, cytochrome c1 and the Rieske protein. It depends on heme b as a cofactor.

Its subcellular location is the mitochondrion inner membrane. Component of the ubiquinol-cytochrome c reductase complex (complex III or cytochrome b-c1 complex) that is part of the mitochondrial respiratory chain. The b-c1 complex mediates electron transfer from ubiquinol to cytochrome c. Contributes to the generation of a proton gradient across the mitochondrial membrane that is then used for ATP synthesis. This chain is Cytochrome b (MT-CYB), found in Sarcophyton glaucum (Toadstool umbrella leather coral).